The chain runs to 669 residues: GTP-binding protein 1 (669 aa).

Residues 1-32 form a disordered region; that stretch reads MATERSRSAMDSPVPASMFAPEPSSPGAARAA. A phosphoserine mark is found at S6, S8, S12, S24, S25, S44, S47, and S69. Residues 158–389 enclose the tr-type G domain; it reads FLEVRVAVVG…LNLLSPRTSY (232 aa). The interval 167–174 is G1; it reads GNVDAGKS. 167–174 is a binding site for GTP; the sequence is GNVDAGKS. Positions 206–210 are G2; sequence GRTSS. A G3 region spans residues 252–255; sequence DLAG. GTP is bound by residues 252–256 and 308–311; these read DLAGH and TKID. Residues 308–311 are G4; the sequence is TKID. The interval 366–368 is G5; it reads SNV. Positions 573–595 are enriched in polar residues; that stretch reads LLQTTNNSPMNSKPQQIKMQSTK. Residues 573-669 form a disordered region; the sequence is LLQTTNNSPM…GACVTPASGC (97 aa). S580 carries the post-translational modification Phosphoserine. Basic residues predominate over residues 646 to 657; sequence GRRRGGQRHKVK.

It belongs to the TRAFAC class translation factor GTPase superfamily. Classic translation factor GTPase family. GTPBP1 subfamily. In terms of assembly, interacts with EXOSC2/RRP4, EXOSC3/RRP40, EXOSC5/RRP46, HNRNPD, HNRNPR and SYNCRIP. Identified in a complex with AANAT mRNA, but does not bind mRNA by itself.

It is found in the cytoplasm. Its function is as follows. Promotes degradation of target mRNA species. Plays a role in the regulation of circadian mRNA stability. Binds GTP and has GTPase activity. This Homo sapiens (Human) protein is GTP-binding protein 1 (GTPBP1).